The sequence spans 657 residues: DNA mismatch repair protein MutL (657 aa).

Belongs to the DNA mismatch repair MutL/HexB family.

Its function is as follows. This protein is involved in the repair of mismatches in DNA. It is required for dam-dependent methyl-directed DNA mismatch repair. May act as a 'molecular matchmaker', a protein that promotes the formation of a stable complex between two or more DNA-binding proteins in an ATP-dependent manner without itself being part of a final effector complex. The polypeptide is DNA mismatch repair protein MutL (Streptococcus agalactiae serotype Ia (strain ATCC 27591 / A909 / CDC SS700)).